Consider the following 281-residue polypeptide: Bifunctional protein FolD (281 aa).

Residues 165–167 (GRG), threonine 192, and valine 233 each bind NADP(+).

This sequence belongs to the tetrahydrofolate dehydrogenase/cyclohydrolase family. Homodimer.

The enzyme catalyses (6R)-5,10-methylene-5,6,7,8-tetrahydrofolate + NADP(+) = (6R)-5,10-methenyltetrahydrofolate + NADPH. It catalyses the reaction (6R)-5,10-methenyltetrahydrofolate + H2O = (6R)-10-formyltetrahydrofolate + H(+). It functions in the pathway one-carbon metabolism; tetrahydrofolate interconversion. Functionally, catalyzes the oxidation of 5,10-methylenetetrahydrofolate to 5,10-methenyltetrahydrofolate and then the hydrolysis of 5,10-methenyltetrahydrofolate to 10-formyltetrahydrofolate. This is Bifunctional protein FolD from Mycobacterium ulcerans (strain Agy99).